The chain runs to 432 residues: Serine hydroxymethyltransferase (432 aa).

(6S)-5,6,7,8-tetrahydrofolate-binding positions include Leu131 and 135-137 (GHL). At Lys240 the chain carries N6-(pyridoxal phosphate)lysine.

This sequence belongs to the SHMT family. In terms of assembly, homodimer. It depends on pyridoxal 5'-phosphate as a cofactor.

It localises to the cytoplasm. It catalyses the reaction (6R)-5,10-methylene-5,6,7,8-tetrahydrofolate + glycine + H2O = (6S)-5,6,7,8-tetrahydrofolate + L-serine. The protein operates within one-carbon metabolism; tetrahydrofolate interconversion. Its pathway is amino-acid biosynthesis; glycine biosynthesis; glycine from L-serine: step 1/1. In terms of biological role, catalyzes the reversible interconversion of serine and glycine with tetrahydrofolate (THF) serving as the one-carbon carrier. This reaction serves as the major source of one-carbon groups required for the biosynthesis of purines, thymidylate, methionine, and other important biomolecules. Also exhibits THF-independent aldolase activity toward beta-hydroxyamino acids, producing glycine and aldehydes, via a retro-aldol mechanism. The sequence is that of Serine hydroxymethyltransferase from Acidiphilium cryptum (strain JF-5).